Reading from the N-terminus, the 150-residue chain is MQVILLETIKNLGDLGAVVDVRSGYGRNFLIPQGKALPATKANLAEVEQRRAELEKHAAQQLGAAQERAEKLNETTVSIAAKAGDEGKLFGSVGTRDIAEAISSSTGVDVEKAEVKLPHGALRTTGEFEIDLALHAEVTVAIKLAVVPAE.

The protein belongs to the bacterial ribosomal protein bL9 family.

Binds to the 23S rRNA. The chain is Large ribosomal subunit protein bL9 from Alcanivorax borkumensis (strain ATCC 700651 / DSM 11573 / NCIMB 13689 / SK2).